The following is an 84-amino-acid chain: Putative membrane protein insertion efficiency factor (84 aa).

The protein belongs to the UPF0161 family.

The protein localises to the cell inner membrane. Functionally, could be involved in insertion of integral membrane proteins into the membrane. The chain is Putative membrane protein insertion efficiency factor from Shewanella baltica (strain OS195).